We begin with the raw amino-acid sequence, 924 residues long: MEDTPERTPSSESIQPPGLAREPEVTSPGDSEGCARPLDPAPKKLCGYLSKFGGKGPIKGWKCRWFFYDERKCHLYYSRTAQDANPLDSIDLSSATFDCKADAEEEGTFEIKTPSRVITLKAATRQVMLYWLQQLQMKRWEFHNSPPALPATPAAALTENGPTLHLKLEQEEAELEEFLCPVKTPPGLVGTAAALQPVPAMPSALQNISLKHLGTEIQNTMYNIRGNKQAQATAHGPPVEESSQSAEPQRGEQPLISDPSIPEKEPEDPPKSAPRSCVPSGPMQKPKRQSNTFPFFSDGLARSRTAQEKVVALEQQVLMLTKELKSQKELVIILHKALEAAQQEKRASSAYLAATEDRDRLELVRHKVRQIAELNQRVEALEQDRERLVHEAGLREQQVQALQQHVQLLMDKNQAKQQVICKLSQKLTEDLAQPQPADATNGDFLSQQERLEHLKDDMEAYRTQNRFLNSEIHQVTKIWRKVAEKEKALLTKCAYLQARNCQVESKYLAGLRRLQEAAGAEPGDFPELLQQLVQEALQWEAGEASDSVGLSPVSEYDDYGFLTVPDYEVEDLKLLAKIQALEVRSHHLLALEAVERPLRDRWATLTELMPSAELKQLLRAGVPREHRPRVWRWLVHRRVQHLHSSGCYQELLARGRACEHPAARQIELDLNRTFPTNKHFTCPTSSFPDKLRRVLLAFSWQNPTIGYCQGLNRLAAIALLVLEDEESAFWCLVAIVETILPAEYYSKTLTASQVDQRVLQDLLSEKLPRLTAHLGQRHVDLSLITFNWFLVIFADSLISDILLRVWDAFLYEGTKVVFRYALAIFKYNEEAILRLQDSLEIYQYLRFFTKTICDSRKLTSIAFNDMNPFPMKQLRQLRAAHRERLEAELRELELLKAEYLERRASRGRAVPEGCVSEDEGEGDS.

Positions 1-38 (MEDTPERTPSSESIQPPGLAREPEVTSPGDSEGCARPL) are disordered. The interaction with CADH1 stretch occupies residues 1 to 167 (MEDTPERTPS…TENGPTLHLK (167 aa)). One can recognise a PH domain in the interval 42–140 (PKKLCGYLSK…WLQQLQMKRW (99 aa)). The disordered stretch occupies residues 228–296 (KQAQATAHGP…KRQSNTFPFF (69 aa)). The segment covering 261–270 (IPEKEPEDPP) has biased composition (basic and acidic residues). Positions 297–435 (SDGLARSRTA…KLTEDLAQPQ (139 aa)) are interaction with RAC1. 3 coiled-coil regions span residues 303–332 (SRTAQEKVVALEQQVLMLTKELKSQKELVI), 361–418 (LELV…AKQQ), and 444–477 (FLSQQERLEHLKDDMEAYRTQNRFLNSEIHQVTK). One can recognise a Rab-GAP TBC domain in the interval 621 to 813 (GVPREHRPRV…RVWDAFLYEG (193 aa)). A coiled-coil region spans residues 871-906 (MKQLRQLRAAHRERLEAELRELELLKAEYLERRASR). Residue S916 is modified to Phosphoserine.

As to quaternary structure, interacts with activated RAC1 and CDH1.

Its subcellular location is the cytoplasm. The protein localises to the cytoplasmic vesicle. The protein resides in the cell junction. Functionally, acts as a GTPase-activating protein for RAB7A. Signal effector acting as a linker between RAC1 and RAB7A, leading to RAB7A inactivation and subsequent inhibition of cadherin degradation and reduced cell-cell adhesion. In Rattus norvegicus (Rat), this protein is TBC1 domain family member 2A (Tbc1d2).